A 450-amino-acid chain; its full sequence is ATP-dependent protease ATPase subunit HslU (450 aa).

Residues Val-27, 69–74 (GVGKTE), Asp-263, Glu-328, and Arg-400 contribute to the ATP site.

The protein belongs to the ClpX chaperone family. HslU subfamily. A double ring-shaped homohexamer of HslV is capped on each side by a ring-shaped HslU homohexamer. The assembly of the HslU/HslV complex is dependent on binding of ATP.

The protein localises to the cytoplasm. ATPase subunit of a proteasome-like degradation complex; this subunit has chaperone activity. The binding of ATP and its subsequent hydrolysis by HslU are essential for unfolding of protein substrates subsequently hydrolyzed by HslV. HslU recognizes the N-terminal part of its protein substrates and unfolds these before they are guided to HslV for hydrolysis. This is ATP-dependent protease ATPase subunit HslU from Aquifex aeolicus (strain VF5).